The primary structure comprises 636 residues: Threonine--tRNA ligase (636 aa).

The TGS domain maps to 1–63 (MNEINVTLPD…ADGARVEIIT (63 aa)). Residues 243–534 (DHRKLGRELD…LIEHFAGNFP (292 aa)) form a catalytic region. Zn(2+) contacts are provided by Cys-335, His-386, and His-511.

The protein belongs to the class-II aminoacyl-tRNA synthetase family. In terms of assembly, homodimer. Zn(2+) is required as a cofactor.

It is found in the cytoplasm. It catalyses the reaction tRNA(Thr) + L-threonine + ATP = L-threonyl-tRNA(Thr) + AMP + diphosphate + H(+). Functionally, catalyzes the attachment of threonine to tRNA(Thr) in a two-step reaction: L-threonine is first activated by ATP to form Thr-AMP and then transferred to the acceptor end of tRNA(Thr). Also edits incorrectly charged L-seryl-tRNA(Thr). The sequence is that of Threonine--tRNA ligase from Citrifermentans bemidjiense (strain ATCC BAA-1014 / DSM 16622 / JCM 12645 / Bem) (Geobacter bemidjiensis).